Consider the following 1073-residue polypeptide: Duffy receptor alpha form (1073 aa).

Residues 1–21 (MEGKKKRPLFFLLVLLLSHKA) form the signal peptide. Residues 22–1007 (NNVLFERMNG…YECFTKGSST (986 aa)) are Extracellular-facing. Residues N134, N179, and N202 are each glycosylated (N-linked (GlcNAc...) asparagine). 2 disulfides stabilise this stretch: C214/C243 and C227/C234. 2 N-linked (GlcNAc...) asparagine glycosylation sites follow: N252 and N348. Cystine bridges form between C297–C374, C412–C429, C424–C504, and C433–C502. The segment at 517–915 (VKNVGSGVES…LNNRKLNRDQ (399 aa)) is disordered. Positions 528 to 543 (AASSNPITEAVKSSSG) are enriched in polar residues. Residues 546–561 (KVQEDSAHKSVNKGEG) are compositionally biased toward basic and acidic residues. The span at 562–576 (KSSTNEADPGSQSGA) shows a compositional bias: polar residues. Basic and acidic residues-rich tracts occupy residues 675 to 710 (GEVH…DDRS) and 717 to 734 (HTDE…KDTE). Residue N679 is glycosylated (N-linked (GlcNAc...) asparagine). Positions 736–766 (AGGSTLTPEQNVSVASDNGNVPGSGNKQNEG) are enriched in polar residues. Residues N746, N779, and N788 are each glycosylated (N-linked (GlcNAc...) asparagine). Residues 799-810 (GNEKDFQKHDFM) show a composition bias toward basic and acidic residues. Composition is skewed to low complexity over residues 821-843 (SDHT…SSDH) and 851-864 (SDQT…SDQT). Basic and acidic residues predominate over residues 867–891 (TEGHHRDNVRNPEIKSSEDMSKGDF). The segment covering 893–909 (RNSNSNELYSHNNLNNR) has biased composition (polar residues). A helical membrane pass occupies residues 1008–1029 (GIVYFATGGAFLIILLLFASWN). At 1030 to 1073 (AASNDYEEEATFDEFVEYSDDIHRTPLMPNDIEHMQQFTPLDYS) the chain is on the cytoplasmic side.

In terms of assembly, interacts (via region II) with human ACKR1 (via N-terminal extracellular domain). Interacts (via region II) with rhesus macaque ACKR1 (via N-terminal extracellular domain).

Its subcellular location is the cell membrane. The protein localises to the cytoplasmic vesicle. It is found in the secretory vesicle. The protein resides in the microneme. In terms of biological role, binds to the human erythrocyte Duffy blood group determinant (ACKR1). Binds to the rhesus macaque erythrocyte Duffy blood group determinant (ACKR1). This is Duffy receptor alpha form from Plasmodium knowlesi.